Consider the following 141-residue polypeptide: Hemoglobin subunit alpha-A (141 aa).

The 141-residue stretch at 1 to 141 folds into the Globin domain; that stretch reads VLSAADKNNV…VGTVLTAKYR (141 aa). His-58 is an O2 binding site. A heme b-binding site is contributed by His-87.

The protein belongs to the globin family. In terms of assembly, heterotetramer of two alpha chains and two beta chains. Red blood cells.

Involved in oxygen transport from the lung to the various peripheral tissues. The chain is Hemoglobin subunit alpha-A (HBAA) from Phasianus colchicus colchicus (Black-necked pheasant).